The following is a 492-amino-acid chain: Putative heme-binding protein VNG_2021C (492 aa).

His177 contacts heme. A disordered region spans residues 253–301 (AGERVPAPEGGADAHGEGERTHHHGDSDHHDGDDGEQHHHSTGDEADDG). Basic and acidic residues predominate over residues 264 to 301 (ADAHGEGERTHHHGDSDHHDGDDGEQHHHSTGDEADDG). One can recognise an ABM domain in the interval 402–490 (GTMGMFYETK…VLADRPRHVF (89 aa)).

In the N-terminal section; belongs to the ChdC family.

The polypeptide is Putative heme-binding protein VNG_2021C (Halobacterium salinarum (strain ATCC 700922 / JCM 11081 / NRC-1) (Halobacterium halobium)).